A 671-amino-acid polypeptide reads, in one-letter code: DNA ligase (671 aa).

NAD(+)-binding positions include 32–36 (DAEYD), 81–82 (SL), and glutamate 113. Residue lysine 115 is the N6-AMP-lysine intermediate of the active site. Arginine 136, glutamate 173, lysine 290, and lysine 314 together coordinate NAD(+). Zn(2+) is bound by residues cysteine 408, cysteine 411, cysteine 426, and cysteine 432. Residues 593 to 671 (EIDSPFAGKT…EAEMIRLLGA (79 aa)) enclose the BRCT domain.

The protein belongs to the NAD-dependent DNA ligase family. LigA subfamily. It depends on Mg(2+) as a cofactor. Mn(2+) is required as a cofactor.

It catalyses the reaction NAD(+) + (deoxyribonucleotide)n-3'-hydroxyl + 5'-phospho-(deoxyribonucleotide)m = (deoxyribonucleotide)n+m + AMP + beta-nicotinamide D-nucleotide.. Its function is as follows. DNA ligase that catalyzes the formation of phosphodiester linkages between 5'-phosphoryl and 3'-hydroxyl groups in double-stranded DNA using NAD as a coenzyme and as the energy source for the reaction. It is essential for DNA replication and repair of damaged DNA. This Salmonella paratyphi C (strain RKS4594) protein is DNA ligase.